Here is a 512-residue protein sequence, read N- to C-terminus: MEKPIRVRFAPSPTGALHIGGVRTALYNYLLARKHQGKFILRIEDTDQNRFVPGAEQYIIDTLQWLGIDPDEGIQQGGPFAPYRQSDRKDMYRKYADQLVQAGKAYYAFDTPEELEAMRERLQAAKVASPQYNAISREWMKNSLTLPQEEVTARINAGEPYVIRFKMPHKEIVRFYDQVRGWVKVETSTLDDKVLLKSDGMATYHLANVVDDYLMQISHVIRGEEWLPSAPLHILLYQAFGWEQTMPQFVHLPILLKPEGHGKLSKRDADKHGFPIFPIAWQDPATGNHIEGFREKGYLPEALINFLALLGWSPGGDQELFTKEALVEAFSLERIGKSGVKFDIQKANWFNQQYLRNKTEKELSVYLTSELDKREIAYTTEQAEQICALVKERAIFPQDFWEQGQVFFQAPTTYDAQAIQKRWTSQAHETLAGFVDILPTISPFNAASIKESLADFLKERSIKINEMMPVIRIALMGTTAGPDLMQSIEIIGQKETIRRLRTALRIIVPVGS.

The short motif at 11–21 (PSPTGALHIGG) is the 'HIGH' region element. Positions 263-267 (KLSKR) match the 'KMSKS' region motif. Lys266 lines the ATP pocket.

Belongs to the class-I aminoacyl-tRNA synthetase family. Glutamate--tRNA ligase type 1 subfamily. Monomer.

It localises to the cytoplasm. The enzyme catalyses tRNA(Glu) + L-glutamate + ATP = L-glutamyl-tRNA(Glu) + AMP + diphosphate. Its function is as follows. Catalyzes the attachment of glutamate to tRNA(Glu) in a two-step reaction: glutamate is first activated by ATP to form Glu-AMP and then transferred to the acceptor end of tRNA(Glu). In Amoebophilus asiaticus (strain 5a2), this protein is Glutamate--tRNA ligase.